The sequence spans 582 residues: Tetratricopeptide repeat protein 24 (582 aa).

A disordered region spans residues 1 to 31 (MSSPNPEDVPRRPEPEPSSSNKKKKKRKWLR). 8 TPR repeats span residues 36 to 69 (IQAL…ASKA), 79 to 112 (QACA…EKAQ), 117 to 150 (GDQC…YQPQ), 154 to 187 (GEAW…YAQE), 236 to 271 (GHLY…VPGE), 273 to 306 (ATVL…HGSV), 313 to 346 (GRSF…ARDS), and 353 to 386 (WQAC…CQKE). 2 disordered regions span residues 418–481 (TSAP…RAGP) and 548–582 (VPNG…CTIV). Positions 441 to 454 (GSSTAGVQHRSSSG) are enriched in polar residues. A compositionally biased stretch (basic and acidic residues) spans 462–472 (EGHQKKKEERS).

The polypeptide is Tetratricopeptide repeat protein 24 (TTC24) (Homo sapiens (Human)).